A 196-amino-acid polypeptide reads, in one-letter code: Thymidine kinase (196 aa).

ATP is bound by residues 9–16 and 88–91; these read SAMNAGKS and DEAQ. Residue Glu89 is the Proton acceptor of the active site. The Zn(2+) site is built by Cys146, Cys148, Cys183, and His186.

It belongs to the thymidine kinase family. As to quaternary structure, homotetramer.

The protein localises to the cytoplasm. It carries out the reaction thymidine + ATP = dTMP + ADP + H(+). The chain is Thymidine kinase from Coxiella burnetii (strain RSA 493 / Nine Mile phase I).